We begin with the raw amino-acid sequence, 69 residues long: DNA gyrase inhibitor YacG (69 aa).

The disordered stretch occupies residues 1 to 28; the sequence is MSGEGKKHGSNVEPLRPTRPCPECGRPS. Residues cysteine 21, cysteine 24, cysteine 36, and cysteine 40 each coordinate Zn(2+).

It belongs to the DNA gyrase inhibitor YacG family. As to quaternary structure, interacts with GyrB. Zn(2+) serves as cofactor.

In terms of biological role, inhibits all the catalytic activities of DNA gyrase by preventing its interaction with DNA. Acts by binding directly to the C-terminal domain of GyrB, which probably disrupts DNA binding by the gyrase. This Sinorhizobium fredii (strain NBRC 101917 / NGR234) protein is DNA gyrase inhibitor YacG.